Consider the following 429-residue polypeptide: Histidine--tRNA ligase (429 aa).

Belongs to the class-II aminoacyl-tRNA synthetase family. As to quaternary structure, homodimer.

The protein localises to the cytoplasm. The enzyme catalyses tRNA(His) + L-histidine + ATP = L-histidyl-tRNA(His) + AMP + diphosphate + H(+). In Streptococcus pneumoniae serotype 2 (strain D39 / NCTC 7466), this protein is Histidine--tRNA ligase.